The sequence spans 144 residues: Nucleoside diphosphate kinase (144 aa).

ATP contacts are provided by Lys-11, Phe-59, Arg-87, Thr-93, Arg-104, and Asn-114. The Pros-phosphohistidine intermediate role is filled by His-117.

Belongs to the NDK family. Homotetramer. The cofactor is Mg(2+).

Its subcellular location is the cytoplasm. It catalyses the reaction a 2'-deoxyribonucleoside 5'-diphosphate + ATP = a 2'-deoxyribonucleoside 5'-triphosphate + ADP. The catalysed reaction is a ribonucleoside 5'-diphosphate + ATP = a ribonucleoside 5'-triphosphate + ADP. Its function is as follows. Major role in the synthesis of nucleoside triphosphates other than ATP. The ATP gamma phosphate is transferred to the NDP beta phosphate via a ping-pong mechanism, using a phosphorylated active-site intermediate. The polypeptide is Nucleoside diphosphate kinase (Aliivibrio fischeri (strain ATCC 700601 / ES114) (Vibrio fischeri)).